Here is a 389-residue protein sequence, read N- to C-terminus: tRNA-specific 2-thiouridylase MnmA (389 aa).

ATP-binding positions include glycine 33–serine 40 and leucine 59. Residue cysteine 120 is the Nucleophile of the active site. A disulfide bond links cysteine 120 and cysteine 219. Glycine 145 contributes to the ATP binding site. Residues lysine 169 to glutamine 171 form an interaction with tRNA region. Cysteine 219 acts as the Cysteine persulfide intermediate in catalysis. Residues arginine 326–tyrosine 327 are interaction with tRNA.

The protein belongs to the MnmA/TRMU family.

It is found in the cytoplasm. The catalysed reaction is S-sulfanyl-L-cysteinyl-[protein] + uridine(34) in tRNA + AH2 + ATP = 2-thiouridine(34) in tRNA + L-cysteinyl-[protein] + A + AMP + diphosphate + H(+). In terms of biological role, catalyzes the 2-thiolation of uridine at the wobble position (U34) of tRNA, leading to the formation of s(2)U34. The polypeptide is tRNA-specific 2-thiouridylase MnmA (Synechococcus sp. (strain WH7803)).